We begin with the raw amino-acid sequence, 506 residues long: Cobyric acid synthase (506 aa).

Residues 251 to 448 (DITIAIVQLP…LHGLFDSDAF (198 aa)) form the GATase cobBQ-type domain. Cys332 serves as the catalytic Nucleophile. Residue His440 is part of the active site.

This sequence belongs to the CobB/CobQ family. CobQ subfamily.

It participates in cofactor biosynthesis; adenosylcobalamin biosynthesis. Its function is as follows. Catalyzes amidations at positions B, D, E, and G on adenosylcobyrinic A,C-diamide. NH(2) groups are provided by glutamine, and one molecule of ATP is hydrogenolyzed for each amidation. This Salmonella heidelberg (strain SL476) protein is Cobyric acid synthase.